Here is a 108-residue protein sequence, read N- to C-terminus: uncharacterized protein (108 aa).

The tract at residues 81–108 is disordered; the sequence is FKCLDSPPPVPPSSSQGEDEENTVDSQY. Acidic residues predominate over residues 97–108; it reads GEDEENTVDSQY.

This is an uncharacterized protein from Saccharomyces cerevisiae (strain ATCC 204508 / S288c) (Baker's yeast).